Here is an 81-residue protein sequence, read N- to C-terminus: Defensin-like protein 144 (81 aa).

The signal sequence occupies residues 1-24 (MKNSFRFSFTVITTFIICVLVSGA). 4 disulfide bridges follow: Cys30/Cys74, Cys42/Cys61, Cys47/Cys69, and Cys51/Cys71.

This sequence belongs to the DEFL family.

It localises to the secreted. This Arabidopsis thaliana (Mouse-ear cress) protein is Defensin-like protein 144 (LCR10).